Consider the following 408-residue polypeptide: Multidrug resistance protein MdtG (408 aa).

Helical transmembrane passes span Leu13–Phe33, Leu51–Trp71, Leu89–Leu109, Ala112–Val132, Gly138–Leu158, Pro170–Ile190, Leu221–Leu241, Leu253–Pro273, Ile287–Ser307, and Ala375–Leu395.

It belongs to the major facilitator superfamily. DHA1 family. MdtG (TC 2.A.1.2.20) subfamily.

It is found in the cell inner membrane. This chain is Multidrug resistance protein MdtG, found in Dickeya zeae (strain Ech586) (Dickeya dadantii (strain Ech586)).